We begin with the raw amino-acid sequence, 233 residues long: Thrombin-like enzyme elegaxobin-1 (233 aa).

One can recognise a Peptidase S1 domain in the interval 1-224 (VIGGDECNIN…HLDWIKGIIA (224 aa)). 6 disulfide bridges follow: Cys7/Cys138, Cys25/Cys41, Cys73/Cys231, Cys117/Cys185, Cys149/Cys164, and Cys175/Cys200. Active-site charge relay system residues include His40 and Asp85. Ser179 serves as the catalytic Charge relay system.

The protein belongs to the peptidase S1 family. Snake venom subfamily. In terms of assembly, monomer. Expressed by the venom gland.

The protein localises to the secreted. Its function is as follows. Thrombin-like snake venom serine protease that clots rabbit fibrinogen. Only the beta chain of fibrinogen (FGB) is cleaved, releasing fibrinopeptide B. Incubation with human fibrinogen alpha and beta resulted in cleavage of both fibrinogen chains but generated neither fibrinopeptide A nor fibrinopeptide B. Promotes clotting of rabbit fibrinogen, but not bovine or human fibrinogen. In Protobothrops elegans (Elegant pitviper), this protein is Thrombin-like enzyme elegaxobin-1.